Reading from the N-terminus, the 276-residue chain is 3-methyl-2-oxobutanoate hydroxymethyltransferase (276 aa).

Positions 50 and 89 each coordinate Mg(2+). 3-methyl-2-oxobutanoate contacts are provided by residues 50–51, Asp-89, and Lys-119; that span reads DS. A Mg(2+)-binding site is contributed by Glu-121. Glu-188 acts as the Proton acceptor in catalysis.

This sequence belongs to the PanB family. In terms of assembly, homodecamer; pentamer of dimers. Mg(2+) serves as cofactor.

It is found in the cytoplasm. The enzyme catalyses 3-methyl-2-oxobutanoate + (6R)-5,10-methylene-5,6,7,8-tetrahydrofolate + H2O = 2-dehydropantoate + (6S)-5,6,7,8-tetrahydrofolate. The protein operates within cofactor biosynthesis; (R)-pantothenate biosynthesis; (R)-pantoate from 3-methyl-2-oxobutanoate: step 1/2. Its function is as follows. Catalyzes the reversible reaction in which hydroxymethyl group from 5,10-methylenetetrahydrofolate is transferred onto alpha-ketoisovalerate to form ketopantoate. The polypeptide is 3-methyl-2-oxobutanoate hydroxymethyltransferase (Paracoccus denitrificans (strain Pd 1222)).